A 987-amino-acid polypeptide reads, in one-letter code: KAT8 regulatory NSL complex subunit 1-like protein (987 aa).

Residue lysine 134 forms a Glycyl lysine isopeptide (Lys-Gly) (interchain with G-Cter in SUMO2) linkage. Serine 462 is subject to Phosphoserine. The disordered stretch occupies residues 708 to 738 (RKKRHLSETALGERTKLEESDFQHTESGSHS). The span at 718–731 (LGERTKLEESDFQH) shows a compositional bias: basic and acidic residues. The PEHE domain maps to 794-915 (EILTPSWRMV…QSQETKSLWW (122 aa)). Position 859 is an N6-acetyllysine (lysine 859). A disordered region spans residues 949 to 972 (GEIFGTSVPENGHHPKKQSDGMEE). The segment covering 959-972 (NGHHPKKQSDGMEE) has biased composition (basic and acidic residues).

Post-translationally, acetylated on lysine residues by KAT8 upon ionizing radiation-induced DNA damage; deacetylated by HDAC3.

The chain is KAT8 regulatory NSL complex subunit 1-like protein (KANSL1L) from Homo sapiens (Human).